The chain runs to 999 residues: Multiple C2 and transmembrane domain-containing protein 1 (999 aa).

The segment covering 1–19 (MEPRAAAAGEPEPPAASSS) has biased composition (low complexity). Positions 1–241 (MEPRAAAAGE…TGEEHGSSQK (241 aa)) are disordered. The span at 34-44 (RSKGGGGGRAG) shows a compositional bias: gly residues. Positions 65–79 (GNAPARGSGAGSRWS) are enriched in low complexity. Polar residues predominate over residues 92-101 (FSSSQPNLCC). Composition is skewed to low complexity over residues 131 to 141 (PAVKGPAAASG) and 149 to 169 (GGRSPDSAPSSSSASSSLSSS). Composition is skewed to basic and acidic residues over residues 175–185 (RGDRARDEGAR) and 228–238 (RAPETGEEHGS). 3 C2 domains span residues 242–360 (IINT…DVTL), 452–569 (QTQS…KLEL), and 603–724 (QKER…AYVL). Ca(2+) contacts are provided by Asp-277, Asp-283, Asp-330, Asp-332, Asp-338, Asp-486, Asp-492, Asp-539, Asp-541, Asp-547, Asp-642, Asp-648, Asp-694, Asp-696, and Asp-702. Transmembrane regions (helical) follow at residues 811–831 (FVLFLFVVWNFELYMIPLVLL) and 914–934 (PFLSWLAIVALCVFTAILYCI).

It belongs to the MCTP family. Ca(2+) serves as cofactor.

It is found in the cytoplasmic vesicle. The protein localises to the secretory vesicle. It localises to the synaptic vesicle membrane. Its subcellular location is the recycling endosome. The protein resides in the endoplasmic reticulum membrane. Functionally, calcium sensor which is essential for the stabilization of normal baseline neurotransmitter release and for the induction and long-term maintenance of presynaptic homeostatic plasticity. The sequence is that of Multiple C2 and transmembrane domain-containing protein 1 (MCTP1) from Homo sapiens (Human).